The following is a 133-amino-acid chain: Fatty acid-binding protein, heart (133 aa).

N-acetylalanine is present on A2. The residue at position 8 (T8) is a Phosphothreonine. Y20 is subject to Phosphotyrosine; by Tyr-kinases. S23 is modified (phosphoserine). At T30 the chain carries Phosphothreonine. S83 bears the Phosphoserine mark. Residue 127-129 participates in (9Z)-octadecenoate binding; that stretch reads RTY. 127–129 is a binding site for hexadecanoate; it reads RTY. An octadecanoate-binding site is contributed by 127-129; that stretch reads RTY.

This sequence belongs to the calycin superfamily. Fatty-acid binding protein (FABP) family.

It localises to the cytoplasm. Functionally, FABPs are thought to play a role in the intracellular transport of long-chain fatty acids and their acyl-CoA esters. In Mus musculus (Mouse), this protein is Fatty acid-binding protein, heart (Fabp3).